The primary structure comprises 860 residues: Beta-glucosidase 1 (860 aa).

The N-terminal stretch at 1 to 19 (MKLSWLEAAALTAASVVSA) is a signal peptide. N-linked (GlcNAc...) asparagine glycans are attached at residues Asn61, Asn211, and Asn252. The active site involves Asp280. N-linked (GlcNAc...) asparagine glycosylation is found at Asn315, Asn322, Asn354, Asn387, Asn442, Asn523, Asn542, Asn564, Asn658, Asn668, Asn690, and Asn712.

It belongs to the glycosyl hydrolase 3 family.

It carries out the reaction Hydrolysis of terminal, non-reducing beta-D-glucosyl residues with release of beta-D-glucose.. The protein operates within glycan metabolism; cellulose degradation. The protein is Beta-glucosidase 1 of Aspergillus aculeatus.